A 355-amino-acid chain; its full sequence is Aurora kinase (355 aa).

Positions 89–340 (FEIGKPLGKG…LEQVMRHPWI (252 aa)) constitute a Protein kinase domain. ATP contacts are provided by residues 95 to 103 (LGKGKFGRV) and Lys118. Asp212 (proton acceptor) is an active-site residue.

It belongs to the protein kinase superfamily. Ser/Thr protein kinase family. Aurora subfamily. Component of the CPC complex at least composed of ark1, bir1 and pic1. Interacts with the mitotic checkpoint complex (MCC) subunit mad3.

The protein localises to the nucleus. It is found in the cytoplasm. It localises to the cytoskeleton. Its subcellular location is the spindle. It carries out the reaction L-seryl-[protein] + ATP = O-phospho-L-seryl-[protein] + ADP + H(+). The enzyme catalyses L-threonyl-[protein] + ATP = O-phospho-L-threonyl-[protein] + ADP + H(+). In terms of biological role, component of the chromosomal passenger complex (CPC), a complex that acts as a key regulator of chromosome segregation and cytokinesis. Has a role in error-correction of aberrent kinetochore-microtubule attachments to ensure that sister kinetochores become bioriented and connect to opposite poles by promoting spindle assembly checkpoint signaling. Ark1 is also required for phosphorylation of histone H3 that accompanies chromosome condensation and condensin recruitment to mitotic chromatin. In Schizosaccharomyces pombe (strain 972 / ATCC 24843) (Fission yeast), this protein is Aurora kinase (ark1).